The sequence spans 69 residues: Protein transport protein Sec61 subunit gamma-3 (69 aa).

Methionine 1 carries the post-translational modification N-acetylmethionine. At 1–32 (MEAIDSAIDPLRDFAKSSVRLVQRCHKPDRKE) the chain is on the cytoplasmic side. A helical transmembrane segment spans residues 33–61 (FTKVAVRTAIGFVVMGFVGFFVKLVFIPI). The Extracellular segment spans residues 62–69 (NNIIVGSS).

This sequence belongs to the SecE/SEC61-gamma family. In terms of assembly, heterotrimeric complex composed of SEC61-alpha, SEC61-beta and SEC61-gamma.

It localises to the endoplasmic reticulum membrane. Functionally, necessary for protein translocation in the endoplasmic reticulum. This is Protein transport protein Sec61 subunit gamma-3 (SEC61G3) from Arabidopsis thaliana (Mouse-ear cress).